A 72-amino-acid chain; its full sequence is Small ribosomal subunit protein bS20 (72 aa).

This sequence belongs to the bacterial ribosomal protein bS20 family.

Binds directly to 16S ribosomal RNA. This chain is Small ribosomal subunit protein bS20 (rpsT), found in Aeromonas salmonicida.